Consider the following 211-residue polypeptide: Adenylate kinase (211 aa).

Glycine 10–threonine 15 is a binding site for ATP. The tract at residues serine 30–valine 59 is NMP. AMP-binding positions include threonine 31, arginine 36, leucine 57 to valine 59, glycine 84 to arginine 87, and glutamine 91. The LID stretch occupies residues glycine 125–aspartate 162. Arginine 126 is a binding site for ATP. 2 residues coordinate Zn(2+): cysteine 129 and cysteine 132. Threonine 135–tyrosine 136 lines the ATP pocket. Residues cysteine 149 and aspartate 152 each contribute to the Zn(2+) site. 2 residues coordinate AMP: arginine 159 and arginine 170. Glycine 198 lines the ATP pocket.

This sequence belongs to the adenylate kinase family. Monomer.

It localises to the cytoplasm. It catalyses the reaction AMP + ATP = 2 ADP. It participates in purine metabolism; AMP biosynthesis via salvage pathway; AMP from ADP: step 1/1. In terms of biological role, catalyzes the reversible transfer of the terminal phosphate group between ATP and AMP. Plays an important role in cellular energy homeostasis and in adenine nucleotide metabolism. The protein is Adenylate kinase of Hydrogenobaculum sp. (strain Y04AAS1).